The following is a 136-amino-acid chain: Large ribosomal subunit protein uL16 (136 aa).

The protein belongs to the universal ribosomal protein uL16 family. As to quaternary structure, part of the 50S ribosomal subunit.

Its function is as follows. Binds 23S rRNA and is also seen to make contacts with the A and possibly P site tRNAs. The protein is Large ribosomal subunit protein uL16 of Ehrlichia chaffeensis (strain ATCC CRL-10679 / Arkansas).